A 511-amino-acid polypeptide reads, in one-letter code: Arabinose import ATP-binding protein AraG (511 aa).

ABC transporter domains are found at residues 5–240 (LEFR…MVGR) and 240–501 (RQID…LRPR). Residue 37 to 44 (GENGAGKS) participates in ATP binding.

The protein belongs to the ABC transporter superfamily. Arabinose importer (TC 3.A.1.2.2) family. In terms of assembly, the complex is composed of two ATP-binding proteins (AraG), two transmembrane proteins (AraH) and a solute-binding protein (AraF).

The protein resides in the cell inner membrane. The catalysed reaction is L-arabinose(out) + ATP + H2O = L-arabinose(in) + ADP + phosphate + H(+). In terms of biological role, part of the ABC transporter complex AraFGH involved in arabinose import. Responsible for energy coupling to the transport system. The protein is Arabinose import ATP-binding protein AraG of Ralstonia nicotianae (strain ATCC BAA-1114 / GMI1000) (Ralstonia solanacearum).